A 1005-amino-acid chain; its full sequence is Myosin IE heavy chain (1005 aa).

Residues 8 to 693 form the Myosin motor domain; it reads EGVPDFVLLN…TLFYFEEKRE (686 aa). 101 to 108 serves as a coordination point for ATP; the sequence is GESGAGKT. Residues 539-562 are disordered; sequence SDPLVQGLFPPTRPEDSKKRPETA. Residues 551-560 are compositionally biased toward basic and acidic residues; that stretch reads RPEDSKKRPE. The actin-binding stretch occupies residues 556-630; it reads KKRPETAGSQ…RAGFAGRIEY (75 aa). IQ domains follow at residues 694–722 and 716–745; these read LEMPRIVTLIQKTWRGYRARSKWNQRKAA and WNQRKAAIKIQLFYRSYRYKKWFRELHRAF. The region spanning 810-1004 is the TH1 domain; sequence KKKWDFRRHF…KGNQATIQFK (195 aa).

The protein belongs to the TRAFAC class myosin-kinesin ATPase superfamily. Myosin family. Myosin I heavy chain is single-headed. Dimer of a heavy and a light chain. Inability to self-assemble into filaments.

Functionally, myosin is a protein that binds to actin and has ATPase activity that is activated by actin. May play a role in moving membranes relative to actin. The protein is Myosin IE heavy chain (myoE) of Dictyostelium discoideum (Social amoeba).